A 378-amino-acid chain; its full sequence is Protein RecA (378 aa).

79–86 is an ATP binding site; it reads GPESSGKT.

Belongs to the RecA family.

The protein localises to the cytoplasm. Functionally, can catalyze the hydrolysis of ATP in the presence of single-stranded DNA, the ATP-dependent uptake of single-stranded DNA by duplex DNA, and the ATP-dependent hybridization of homologous single-stranded DNAs. It interacts with LexA causing its activation and leading to its autocatalytic cleavage. This is Protein RecA from Streptococcus pyogenes serotype M12 (strain MGAS2096).